A 172-amino-acid chain; its full sequence is Scytalone dehydratase-like protein Arp1 (172 aa).

Tyrosine 49 is a binding site for substrate. Active-site residues include histidine 84 and histidine 109. Asparagine 130 is a substrate binding site.

It belongs to the scytalone dehydratase family. In terms of assembly, homotrimer. Each subunit contains an active site, located in the central part of the hydrophobic core of the monomer, which functions independently.

Scytalone dehydratase-like protein; part of the Pks2 gene cluster that mediates the formation of infectious structures (appressoria), enabling these fungi to kill insects faster. The product of the Pks2 gene cluster is different from the one of Pks1 and has still not been identified. The chain is Scytalone dehydratase-like protein Arp1 from Metarhizium robertsii (strain ARSEF 23 / ATCC MYA-3075) (Metarhizium anisopliae (strain ARSEF 23)).